Here is a 328-residue protein sequence, read N- to C-terminus: Fructose-1,6-bisphosphatase class 1 (328 aa).

Residues Glu-89, Asp-110, Leu-112, and Asp-113 each contribute to the Mg(2+) site. Substrate is bound by residues Asn-206, Tyr-234, 252-254 (YLY), and Lys-264. Glu-270 contributes to the Mg(2+) binding site.

This sequence belongs to the FBPase class 1 family. As to quaternary structure, homotetramer. Requires Mg(2+) as cofactor.

Its subcellular location is the cytoplasm. It catalyses the reaction beta-D-fructose 1,6-bisphosphate + H2O = beta-D-fructose 6-phosphate + phosphate. It participates in carbohydrate biosynthesis; gluconeogenesis. In Wigglesworthia glossinidia brevipalpis, this protein is Fructose-1,6-bisphosphatase class 1.